Here is a 679-residue protein sequence, read N- to C-terminus: NADPH--cytochrome P450 reductase (679 aa).

Residues 1–21 (MADSHGDTGATMPEAAAQEAS) lie on the Lumenal side of the membrane. Residues 22–42 (VFSMTDVVLFSLIVGLITYWF) traverse the membrane as a helical segment. Residues 43–679 (LFRKKKEEVP…KGRYSLDVWS (637 aa)) are Cytoplasmic-facing. At serine 64 the chain carries Phosphoserine. Residues 81–225 (IVVFYGSQTG…DFITWREQFW (145 aa)) form the Flavodoxin-like domain. FMN is bound by residues 87-92 (SQTGTA), 139-142 (ATYG), 174-183 (LGNKTYEHFN), and aspartate 209. The 243-residue stretch at 280-522 (KNPFLATVTT…FVRKSQFRLP (243 aa)) folds into the FAD-binding FR-type domain. Residue arginine 299 participates in NADP(+) binding. Residues arginine 425, 455–458 (RYYS), 473–475 (CAV), tyrosine 479, and 489–492 (GVAT) contribute to the FAD site. NADP(+)-binding positions include threonine 536, 597–598 (SR), 603–607 (KVYVQ), and aspartate 640. Residue tryptophan 678 participates in FAD binding.

It belongs to the NADPH--cytochrome P450 reductase family. The protein in the N-terminal section; belongs to the flavodoxin family. In the C-terminal section; belongs to the flavoprotein pyridine nucleotide cytochrome reductase family. Requires FAD as cofactor. The cofactor is FMN.

The protein resides in the endoplasmic reticulum membrane. The catalysed reaction is 2 oxidized [cytochrome P450] + NADPH = 2 reduced [cytochrome P450] + NADP(+) + H(+). Its function is as follows. This enzyme is required for electron transfer from NADP to cytochrome P450 in microsomes. It can also provide electron transfer to heme oxygenase and cytochrome B5. The sequence is that of NADPH--cytochrome P450 reductase from Oryctolagus cuniculus (Rabbit).